The primary structure comprises 185 residues: Pyridoxal 5'-phosphate synthase subunit PdxT (185 aa).

46 to 48 (GES) lines the L-glutamine pocket. The active-site Nucleophile is cysteine 78. Residues arginine 106 and 132–133 (IR) contribute to the L-glutamine site. Active-site charge relay system residues include histidine 168 and glutamate 170.

Belongs to the glutaminase PdxT/SNO family. In terms of assembly, in the presence of PdxS, forms a dodecamer of heterodimers. Only shows activity in the heterodimer.

The enzyme catalyses aldehydo-D-ribose 5-phosphate + D-glyceraldehyde 3-phosphate + L-glutamine = pyridoxal 5'-phosphate + L-glutamate + phosphate + 3 H2O + H(+). The catalysed reaction is L-glutamine + H2O = L-glutamate + NH4(+). It functions in the pathway cofactor biosynthesis; pyridoxal 5'-phosphate biosynthesis. Catalyzes the hydrolysis of glutamine to glutamate and ammonia as part of the biosynthesis of pyridoxal 5'-phosphate. The resulting ammonia molecule is channeled to the active site of PdxS. The protein is Pyridoxal 5'-phosphate synthase subunit PdxT of Corynebacterium diphtheriae (strain ATCC 700971 / NCTC 13129 / Biotype gravis).